Here is a 312-residue protein sequence, read N- to C-terminus: Formimidoylglutamase (312 aa).

Mn(2+) contacts are provided by His-123, Asp-152, His-154, Asp-156, Cys-243, and Asp-245.

This sequence belongs to the arginase family. Requires Mn(2+) as cofactor.

It catalyses the reaction N-formimidoyl-L-glutamate + H2O = formamide + L-glutamate. The protein operates within amino-acid degradation; L-histidine degradation into L-glutamate; L-glutamate from N-formimidoyl-L-glutamate (hydrolase route): step 1/1. In terms of biological role, catalyzes the conversion of N-formimidoyl-L-glutamate to L-glutamate and formamide. This is Formimidoylglutamase from Pseudomonas fluorescens (strain ATCC BAA-477 / NRRL B-23932 / Pf-5).